The sequence spans 322 residues: Cytochrome f (322 aa).

Residues 1 to 35 form the signal peptide; sequence MQNRNIFSWVKEQTTRSISVSIMILIYVITWTSIS. Heme is bound by residues Y38, C58, C61, and H62. A helical membrane pass occupies residues 288-308; it reads VQGLFFFFASVILAQIFLVLK.

The protein belongs to the cytochrome f family. As to quaternary structure, the 4 large subunits of the cytochrome b6-f complex are cytochrome b6, subunit IV (17 kDa polypeptide, petD), cytochrome f and the Rieske protein, while the 4 small subunits are PetG, PetL, PetM and PetN. The complex functions as a dimer. It depends on heme as a cofactor.

It is found in the plastid. Its subcellular location is the chloroplast thylakoid membrane. Its function is as follows. Component of the cytochrome b6-f complex, which mediates electron transfer between photosystem II (PSII) and photosystem I (PSI), cyclic electron flow around PSI, and state transitions. This Nandina domestica (Heavenly bamboo) protein is Cytochrome f.